The sequence spans 312 residues: MSANTSMVTEFLLLGFSHLADLQGLLFSVFLTIYLLTVAGNFLIVVLVSTDAALQSPMYFFLRTLSALEIGYTSVTVPLLLHHLLTGRRHISRSGCALQMFFFLFFGATECCLLAAMAYDRYAAICEPLRYPLLLSHRVCLQLAGSAWACGVLVGLGHTPFIFSLPFCGPNTIPQFFCEIQPVLQLVCGDTSLNELQIILATALLILCPFGLILGSYGRILVTIFRIPSVAGRRKAFSTCSSHLIMVSLFYGTALFIYIRPKASYDPATDPLVSLFYAVVTPILNPIIYSLRNTEVKAALKRTIQKTVPMEI.

Residues 1–24 (MSANTSMVTEFLLLGFSHLADLQG) are Extracellular-facing. N4 carries N-linked (GlcNAc...) asparagine glycosylation. The helical transmembrane segment at 25–45 (LLFSVFLTIYLLTVAGNFLIV) threads the bilayer. Over 46–53 (VLVSTDAA) the chain is Cytoplasmic. Residues 54–74 (LQSPMYFFLRTLSALEIGYTS) traverse the membrane as a helical segment. Residues 75–98 (VTVPLLLHHLLTGRRHISRSGCAL) lie on the Extracellular side of the membrane. Residues C96 and C188 are joined by a disulfide bond. The chain crosses the membrane as a helical span at residues 99 to 119 (QMFFFLFFGATECCLLAAMAY). Topologically, residues 120-138 (DRYAAICEPLRYPLLLSHR) are cytoplasmic. Residues 139–159 (VCLQLAGSAWACGVLVGLGHT) traverse the membrane as a helical segment. Residues 160–196 (PFIFSLPFCGPNTIPQFFCEIQPVLQLVCGDTSLNEL) lie on the Extracellular side of the membrane. Residues 197–216 (QIILATALLILCPFGLILGS) form a helical membrane-spanning segment. The Cytoplasmic segment spans residues 217–236 (YGRILVTIFRIPSVAGRRKA). A helical membrane pass occupies residues 237–257 (FSTCSSHLIMVSLFYGTALFI). Over 258–270 (YIRPKASYDPATD) the chain is Extracellular. Residues 271 to 291 (PLVSLFYAVVTPILNPIIYSL) traverse the membrane as a helical segment. The Cytoplasmic portion of the chain corresponds to 292-312 (RNTEVKAALKRTIQKTVPMEI).

This sequence belongs to the G-protein coupled receptor 1 family.

Its subcellular location is the cell membrane. Odorant receptor. The protein is Olfactory receptor 10C1 (OR10C1) of Homo sapiens (Human).